A 208-amino-acid chain; its full sequence is Uridine kinase (208 aa).

Residue 11-18 (GGTGSGKS) participates in ATP binding.

This sequence belongs to the uridine kinase family.

The protein localises to the cytoplasm. It catalyses the reaction uridine + ATP = UMP + ADP + H(+). The enzyme catalyses cytidine + ATP = CMP + ADP + H(+). It participates in pyrimidine metabolism; CTP biosynthesis via salvage pathway; CTP from cytidine: step 1/3. The protein operates within pyrimidine metabolism; UMP biosynthesis via salvage pathway; UMP from uridine: step 1/1. The sequence is that of Uridine kinase from Alkaliphilus metalliredigens (strain QYMF).